The following is a 362-amino-acid chain: Flagellar P-ring protein (362 aa).

An N-terminal signal peptide occupies residues 1–15; it reads MLAAALMSAAFGAHA.

This sequence belongs to the FlgI family. In terms of assembly, the basal body constitutes a major portion of the flagellar organelle and consists of four rings (L,P,S, and M) mounted on a central rod.

It localises to the periplasm. It is found in the bacterial flagellum basal body. In terms of biological role, assembles around the rod to form the L-ring and probably protects the motor/basal body from shearing forces during rotation. This is Flagellar P-ring protein from Pseudomonas fluorescens (strain Pf0-1).